Consider the following 321-residue polypeptide: Digestive cysteine proteinase 3 (321 aa).

Positions Met1–Ala16 are cleaved as a signal peptide. Residues Ser17 to Met106 constitute a propeptide, activation peptide. Disulfide bonds link Cys127-Cys170, Cys161-Cys203, and Cys261-Cys310. Residue Cys130 is part of the active site. Active-site residues include His268 and Asn288.

It belongs to the peptidase C1 family.

Its activity is regulated as follows. Inhibited by E-64, antipain, leupeptin, heavy metal ions, iodoacetic acid, dithionitrobenzene, p-hydroxymercuri-benzoate; activated by mercaptoethanol and dithiothreitol. In Homarus americanus (American lobster), this protein is Digestive cysteine proteinase 3 (LCP3).